The primary structure comprises 474 residues: PRAME family member 8 (474 aa).

The LRR 1; degenerate repeat unit spans residues 97–122; sequence QSKLQVLDLRNVDENFCDIFSGATAS. The stretch at 177 to 201 is one LRR 2; degenerate repeat; the sequence is HVCCKELQVFGMPIHSIIEVLNMVE. The LRR 3; degenerate repeat unit spans residues 202-228; it reads LDCIQEVEVCCPWELSTLVKFAPYLGQ. An LRR 4; degenerate repeat occupies 229-264; it reads MRNLRKLVLFNIRASACIPPDNKGQFIARFTSQFLK. LRR repeat units lie at residues 265-290, 291-322, 323-341, 347-374, and 375-399; these read LDYF…LRCL, QASL…RQLK, ELDL…PLTG, VATL…VLSR, and CSQL…LLRH.

This sequence belongs to the PRAME family.

The chain is PRAME family member 8 from Homo sapiens (Human).